A 265-amino-acid polypeptide reads, in one-letter code: Mlc titration factor A (265 aa).

Zn(2+)-binding residues include H111, H148, H152, and E211.

The protein belongs to the MtfA family. As to quaternary structure, interacts with Mlc. Zn(2+) serves as cofactor.

The protein resides in the cytoplasm. Its function is as follows. Involved in the modulation of the activity of the glucose-phosphotransferase system (glucose-PTS). Interacts with the transcriptional repressor Mlc, preventing its interaction with DNA and leading to the modulation of expression of genes regulated by Mlc, including ptsG, which encodes the PTS system glucose-specific EIICB component. In terms of biological role, shows zinc-dependent metallopeptidase activity. This is Mlc titration factor A from Escherichia fergusonii (strain ATCC 35469 / DSM 13698 / CCUG 18766 / IAM 14443 / JCM 21226 / LMG 7866 / NBRC 102419 / NCTC 12128 / CDC 0568-73).